The sequence spans 334 residues: Putative heat shock protein HSP 90-alpha A5 (334 aa).

Residues 55 to 107 (KRNKQVSDAEAEKKEDKRKKKKESNDKPEIEDVGSDEEEEKKDADKKKKKSKE) form a disordered region. Over residues 59–69 (QVSDAEAEKKE) the composition is skewed to basic and acidic residues. The span at 85–94 (EDVGSDEEEE) shows a compositional bias: acidic residues. Serine 89 carries the post-translational modification Phosphoserine. Residues 234 to 267 (LELPEDEEEKKKQEEKKTKFENLCKIMKDMLEKK) adopt a coiled-coil conformation. Residues 314–334 (EMPPLRGGDDTSRMEEVGGSG) form a disordered region. Positions 320–334 (GGDDTSRMEEVGGSG) are enriched in basic and acidic residues. The TPR repeat-binding motif lies at 327-331 (MEEVG).

It belongs to the heat shock protein 90 family. As to quaternary structure, homodimer.

Its subcellular location is the cytoplasm. In terms of biological role, putative molecular chaperone that may promote the maturation, structural maintenance and proper regulation of specific target proteins. The polypeptide is Putative heat shock protein HSP 90-alpha A5 (HSP90AA5P) (Homo sapiens (Human)).